We begin with the raw amino-acid sequence, 427 residues long: Peptidyl-prolyl cis-trans isomerase sig-7 (427 aa).

Residues 6 to 161 (ETTLGDLIID…KDIRISHTIV (156 aa)) enclose the PPIase cyclophilin-type domain. Positions 195-227 (DEKEDEDEGKTAEEIAEELQQREMAEQAQILEM) form a coiled coil. The RRM domain occupies 241–319 (NVLFVCKLNP…RRIHVDFSQS (79 aa)). Residues 322 to 334 (QNYKYKPKSQQQE) are compositionally biased toward polar residues. The tract at residues 322 to 427 (QNYKYKPKSQ…RSPDRRRDRR (106 aa)) is disordered. A compositionally biased stretch (basic residues) spans 351 to 370 (SHQRSPSPRRRRSPSPKKDK). Over residues 384–427 (SSDNHRDRDRSYRDNNRDRRDNHRDSDRDRRRHDRSPDRRRDRR) the composition is skewed to basic and acidic residues.

Belongs to the cyclophilin-type PPIase family. PPIL4 subfamily. As to quaternary structure, interacts with ama-1, the catalytic subunit of the RNA polymerase II (RNA pol II) complex. As to expression, ubiquitous.

The protein resides in the nucleus. It localises to the nucleoplasm. The protein localises to the chromosome. It carries out the reaction [protein]-peptidylproline (omega=180) = [protein]-peptidylproline (omega=0). In terms of biological role, probable PPIase that accelerates the folding of proteins. It catalyzes the cis-trans isomerization of proline imidic peptide bonds in oligopeptides. Involved in RNA polymerase II (RNA pol II)-mediated transcription elongation, and in primary transcript splicing, including co-transcriptional trans-splicing, in association with the catalytic subunit of the RNA pol II complex ama-1. Also plays a role in the regulation of elongation-dependent phosphorylation of ama-1 to control transcription. Involved in the transcription of several genes during embryogenesis and in particular, of genes related to developmental processes such as gastrulation, and also regulates transcription in germ cells from embryogenesis to adulthood. This is Peptidyl-prolyl cis-trans isomerase sig-7 from Caenorhabditis elegans.